The primary structure comprises 354 residues: Selenide, water dikinase (354 aa).

Residue C23 is part of the active site. ATP contacts are provided by residues K26 and 54–56 (TSD). Residue D57 participates in Mg(2+) binding. ATP is bound by residues D74, D97, and 145-147 (GHS). Mg(2+) is bound at residue D97. A Mg(2+)-binding site is contributed by D233.

Belongs to the selenophosphate synthase 1 family. Class I subfamily. In terms of assembly, homodimer. Requires Mg(2+) as cofactor.

It catalyses the reaction hydrogenselenide + ATP + H2O = selenophosphate + AMP + phosphate + 2 H(+). Its function is as follows. Synthesizes selenophosphate from selenide and ATP. The sequence is that of Selenide, water dikinase from Burkholderia pseudomallei (strain K96243).